The following is a 516-amino-acid chain: Leucine-rich repeat transmembrane neuronal protein 2 (516 aa).

A signal peptide spans 1–33; it reads MGLHFKWPLGAPMLAAIYAMSMVLKMLPALGMA. Residues 34–61 enclose the LRRNT domain; it reads CPPKCRCEKLLFYCDSQGFHSVPNATDK. Residues 34-422 lie on the Extracellular side of the membrane; the sequence is CPPKCRCEKL…EPDNAIFTQR (389 aa). Residue Asn57 is glycosylated (N-linked (GlcNAc...) asparagine). 10 LRR repeats span residues 63–83, 86–107, 110–131, 134–155, 158–179, 182–203, 206–227, 230–251, 254–275, and 278–299; these read SLGLSLRHNHITELERDQFAS, QLTWLHLDHNQISTVKEDAFQG, KLKELILSSNKIFYLPNTTFTQ, NLQNLDLSFNQLSSLHPELFYG, KLQTLHLRSNSLRTIPVRLFWD, SLEFLDLSTNRLRSLARNGFAG, KLRELHLEHNQLTKINFAHFLR, SLHTLFLQWNKISNLTCGMEWT, TLEKLDLTGNEIKAIDLTVFET, and NLKILLMDNNKLNSLDSKILNS. Asn126 carries N-linked (GlcNAc...) asparagine glycosylation. An N-linked (GlcNAc...) asparagine glycan is attached at Asn243. The LRRCT domain maps to 311–362; it reads NLWECSARICALASWLGSFQGRWEHSILCHSPDHTQGEDILDAVHGFQLCWN. Residue Asn362 is glycosylated (N-linked (GlcNAc...) asparagine). The helical transmembrane segment at 423–443 threads the bilayer; the sequence is VITGTMALLFSFFFIIFIVFI. The Cytoplasmic portion of the chain corresponds to 444–516; it reads SRKCCPPTLR…QQLPYKECEV (73 aa). An Involved in DLG4-binding motif is present at residues 513–516; it reads ECEV.

It belongs to the LRRTM family. Interacts with DLG4. Interacts with neurexin NRXN1; interaction is mediated by heparan sulfate glycan modification on neurexin. In terms of tissue distribution, expressed in neuronal tissues.

The protein localises to the cell membrane. It localises to the postsynaptic cell membrane. In terms of biological role, involved in the development and maintenance of excitatory synapses in the vertebrate nervous system. Regulates surface expression of AMPA receptors and instructs the development of functional glutamate release sites. Acts as a ligand for the presynaptic receptors NRXN1-A and NRXN1-B. The protein is Leucine-rich repeat transmembrane neuronal protein 2 (LRRTM2) of Homo sapiens (Human).